The primary structure comprises 213 residues: Gas vesicle protein F1 (213 aa).

Belongs to the gas vesicle GvpF/GvpL family. In terms of assembly, binds GvpA1 in early growth stages; is the only one of GvpF1 to GvpM1 that interacts with GvpA1 in H.volcanii experiments. GvpF to GvpM interact with each other in vitro, and may form multi-subunit complex(es). Interacts with GvpC1 and GvpO1.

Its subcellular location is the gas vesicle. The protein resides in the cytoplasm. Its function is as follows. Might be involved in preventing aggregation of GvpA1. Proteins GvpF to GvpM might be involved in nucleating gas vesicle formation. A minor component of the gas vesicle, also found in soluble extracts. Gas vesicles are hollow, gas filled proteinaceous nanostructures found in several microbial planktonic microorganisms. They allow positioning of halobacteria at the optimal depth for growth in the poorly aerated, shallow brine pools of their habitat. Expression of a 9.5 kb p-vac DNA fragment containing 2 divergently transcribed regions (gvpD-gvpE-gvpF-gvpG-gvpH-gvpI-gvpJ-gvpK-gvpL-gvpM and gvpA-gvpC-gvpN-gvpO) allows H.volcanii to produce gas vesicles. A minimal gas vesicle can be made in H.volcanii by gvpA1-gvpO1 plus gvpF1-gvpG1-gvpJ1-gvpK1-gvpL1-gvpM1; lack of enough GvpJ1 prevents formation. The same region restores gas vesicle production in H.halobium without the p-vac locus. The protein is Gas vesicle protein F1 (gvpF11) of Halobacterium salinarum (strain ATCC 700922 / JCM 11081 / NRC-1) (Halobacterium halobium).